The following is a 280-amino-acid chain: Undecaprenyl-diphosphatase (280 aa).

The next 7 helical transmembrane spans lie at 1-21 (MTLL…PFPV), 45-65 (FLPF…GVFW), 90-110 (IFGL…LLEH), 115-135 (VFGT…LLMV), 151-171 (IATL…LALL), 226-246 (IMVQ…ICSL), and 260-280 (LTPF…VILL).

Belongs to the UppP family.

Its subcellular location is the cell inner membrane. It catalyses the reaction di-trans,octa-cis-undecaprenyl diphosphate + H2O = di-trans,octa-cis-undecaprenyl phosphate + phosphate + H(+). Its function is as follows. Catalyzes the dephosphorylation of undecaprenyl diphosphate (UPP). Confers resistance to bacitracin. This Gluconobacter oxydans (strain 621H) (Gluconobacter suboxydans) protein is Undecaprenyl-diphosphatase.